A 621-amino-acid polypeptide reads, in one-letter code: 1-deoxy-D-xylulose-5-phosphate synthase (621 aa).

Thiamine diphosphate-binding positions include His-80 and Gly-121–Ser-123. Asp-152 is a Mg(2+) binding site. Thiamine diphosphate is bound by residues Gly-153–Ala-154, Asn-181, Tyr-288, and Glu-370. Asn-181 contributes to the Mg(2+) binding site.

It belongs to the transketolase family. DXPS subfamily. As to quaternary structure, homodimer. Mg(2+) serves as cofactor. Requires thiamine diphosphate as cofactor.

The catalysed reaction is D-glyceraldehyde 3-phosphate + pyruvate + H(+) = 1-deoxy-D-xylulose 5-phosphate + CO2. It functions in the pathway metabolic intermediate biosynthesis; 1-deoxy-D-xylulose 5-phosphate biosynthesis; 1-deoxy-D-xylulose 5-phosphate from D-glyceraldehyde 3-phosphate and pyruvate: step 1/1. Catalyzes the acyloin condensation reaction between C atoms 2 and 3 of pyruvate and glyceraldehyde 3-phosphate to yield 1-deoxy-D-xylulose-5-phosphate (DXP). This is 1-deoxy-D-xylulose-5-phosphate synthase from Vibrio vulnificus (strain CMCP6).